The following is a 442-amino-acid chain: Proline--tRNA ligase (442 aa).

This sequence belongs to the class-II aminoacyl-tRNA synthetase family. ProS type 2 subfamily. Homodimer.

Its subcellular location is the cytoplasm. The enzyme catalyses tRNA(Pro) + L-proline + ATP = L-prolyl-tRNA(Pro) + AMP + diphosphate. Its function is as follows. Catalyzes the attachment of proline to tRNA(Pro) in a two-step reaction: proline is first activated by ATP to form Pro-AMP and then transferred to the acceptor end of tRNA(Pro). This is Proline--tRNA ligase from Brucella abortus (strain S19).